We begin with the raw amino-acid sequence, 339 residues long: Uroporphyrinogen decarboxylase (339 aa).

Substrate contacts are provided by residues 21–25 (RQAGR), Asp71, Tyr147, Ser202, and His315.

The protein belongs to the uroporphyrinogen decarboxylase family. As to quaternary structure, homodimer.

The protein resides in the cytoplasm. The catalysed reaction is uroporphyrinogen III + 4 H(+) = coproporphyrinogen III + 4 CO2. It participates in porphyrin-containing compound metabolism; protoporphyrin-IX biosynthesis; coproporphyrinogen-III from 5-aminolevulinate: step 4/4. Functionally, catalyzes the decarboxylation of four acetate groups of uroporphyrinogen-III to yield coproporphyrinogen-III. This chain is Uroporphyrinogen decarboxylase, found in Helicobacter pylori (strain P12).